The chain runs to 707 residues: Caprin-1 (707 aa).

Composition is skewed to low complexity over residues 1–15 (MPSA…SKSS) and 22–43 (GSSG…PATG). Residues 1-48 (MPSATSHSGSGSKSSGPPPPSGSSGSEAAAGAAAPASQHPATGTGAVQ) form a disordered region. N-acetylproline is present on proline 2. Serine 10 bears the Phosphoserine mark. Residues 58 to 92 (VIDKKLRNLEKKKGKLDDYQERMNKGERLNQDQLD) adopt a coiled-coil conformation. Serine 113 is modified (phosphoserine). Positions 123–151 (KTIKKTARREQLMREEAEQKRLKTVLELQ) form a coiled coil. An Omega-N-methylarginine modification is found at arginine 163. A disordered region spans residues 325-347 (LQQQPQAASPSVPEPHSLTPVAQ). The segment covering 326–335 (QQQPQAASPS) has biased composition (low complexity). Serine 333 and serine 341 each carry phosphoserine. The tract at residues 358–379 (QDLMAQMQGPYNFIQDSMLDFE) is G3BP1-binding. Disordered regions lie at residues 412–443 (ESRL…YTAS), 523–558 (PVPP…EQTE), and 570–620 (TYHG…RGLM). The span at 431–443 (PLVSSTSEGYTAS) shows a compositional bias: polar residues. Residues 535–558 (QQSQYQASYNQSFSSQPHQVEQTE) show a composition bias toward low complexity. Residues 572–603 (HGSQDQPHQVPGNHQQPPQQSTGFPRSSQPYY) show a composition bias toward polar residues. Phosphotyrosine is present on tyrosine 623. Residues arginine 624 and arginine 631 each carry the omega-N-methylarginine modification. Phosphotyrosine is present on residues tyrosine 634 and tyrosine 637. Arginine 638 bears the Omega-N-methylarginine mark. Residues 641–655 (FSNTPNSGYTQSQFN) are compositionally biased toward polar residues. Residues 641 to 707 (FSNTPNSGYT…MPQMNTQQVN (67 aa)) form a disordered region. O-linked (GlcNAc) serine glycans are attached at residues serine 642 and serine 647. Residues tyrosine 649, tyrosine 660, tyrosine 663, and tyrosine 668 each carry the phosphotyrosine modification. Composition is skewed to low complexity over residues 674 to 684 (RGSGQSGPRGA) and 695 to 707 (NRGM…QQVN). Position 696 is an asymmetric dimethylarginine; alternate (arginine 696). Arginine 696 bears the Omega-N-methylarginine; alternate mark.

The protein belongs to the caprin family. May form homomultimers. Interacts with G3BP1; interaction is direct and promotes stress granule formation. Interacts with G3BP2; interaction is direct and promotes stress granule formation. Interacts with PQBP1. Interacts with DDX3X. Interacts (when phosphorylated by EPHA4) with FMR1; interaction with FMR1 promotes formation of a membraneless compartment. Tyrosine phosphorylation by EPHA4 promotes interaction with FMR1 and liquid-liquid phase separation (LLPS) for the formation of a membraneless compartment that concentrates mRNAs with associated regulatory factors. Post-translationally, O-glycosylated (O-GlcNAcylated), in a cell cycle-dependent manner. O-glycosylation by OGT inhibit ability to undergo liquid-liquid phase separation (LLPS). Expressed in hippocampal and neocortical pyramidal neurons, but not in Purkinje cells.

Its subcellular location is the cytoplasm. The protein resides in the cytoplasmic ribonucleoprotein granule. It localises to the cytosol. It is found in the cell projection. The protein localises to the dendrite. Its subcellular location is the lamellipodium. With respect to regulation, ability to mediate liquid-liquid phase separation is regulated by ATP: moderate concentrations of ATP enhance phase separation, whereas high concentrations of ATP lead to inhibition of phase separation. In terms of biological role, mRNA-binding protein that acts as a regulator of mRNAs transport, translation and/or stability, and which is involved in neurogenesis, synaptic plasticity in neurons and cell proliferation and migration in multiple cell types. Plays an essential role in cytoplasmic stress granule formation. Acts as an mRNA regulator by mediating formation of some phase-separated membraneless compartment: undergoes liquid-liquid phase separation upon binding to target mRNAs, leading to assemble mRNAs into cytoplasmic ribonucleoprotein granules that concentrate mRNAs with associated regulatory factors. Undergoes liquid-liquid phase separation following phosphorylation and interaction with FMR1, promoting formation of cytoplasmic ribonucleoprotein granules that concentrate mRNAs with factors that inhibit translation and mediate deadenylation of target mRNAs. In these cytoplasmic ribonucleoprotein granules, CAPRIN1 mediates recruitment of CNOT7 deadenylase, leading to mRNA deadenylation and degradation. Binds directly and selectively to MYC and CCND2 mRNAs. In neuronal cells, directly binds to several mRNAs associated with RNA granules, including BDNF, CAMK2A, CREB1, MAP2, NTRK2 mRNAs, as well as to GRIN1 and KPNB1 mRNAs, but not to rRNAs. This chain is Caprin-1 (Caprin1), found in Rattus norvegicus (Rat).